The chain runs to 367 residues: MAEFNALELVNPGVKQLRPYQAGKPTSELQRELGLQHVVKLASNENPLGLSEKVKTALEAELTDLVRYPDANGYYLKSRLAELNEVGTQQITLGNGSNDVLEILARTFVSDKDEVIFSQHAFVVYPLVTQAIGAKPVAVPAVDYGHDLDGMAKAVTDKTKMIFIANPNNPTGTFLSTSALKSFLDKIPQHIIVVLDEAYYEYVPEDQRAPSVEWIKEYPNLVVSRTFSKAYGLAGLRAGYAVSHESVADVLNRIRQPFNMNSLSLKAAEVVLDDHAYLQKAVELNAQGMQLLTEFCEESGLNYIPSYGNFLTIEVGPGAEKLYDELLHEGVIVRPVGGYELPNHLRVSIGLPEENQAFIKAMKKLRG.

K229 is modified (N6-(pyridoxal phosphate)lysine).

It belongs to the class-II pyridoxal-phosphate-dependent aminotransferase family. Histidinol-phosphate aminotransferase subfamily. As to quaternary structure, homodimer. It depends on pyridoxal 5'-phosphate as a cofactor.

It carries out the reaction L-histidinol phosphate + 2-oxoglutarate = 3-(imidazol-4-yl)-2-oxopropyl phosphate + L-glutamate. It participates in amino-acid biosynthesis; L-histidine biosynthesis; L-histidine from 5-phospho-alpha-D-ribose 1-diphosphate: step 7/9. This Idiomarina loihiensis (strain ATCC BAA-735 / DSM 15497 / L2-TR) protein is Histidinol-phosphate aminotransferase 1.